Consider the following 64-residue polypeptide: Large ribosomal subunit protein bL35 (64 aa).

The protein belongs to the bacterial ribosomal protein bL35 family.

The chain is Large ribosomal subunit protein bL35 from Pelodictyon phaeoclathratiforme (strain DSM 5477 / BU-1).